We begin with the raw amino-acid sequence, 543 residues long: Chaperonin GroEL (543 aa).

Residues T29 to P32, D86 to T90, G413, D477 to L479, and D493 contribute to the ATP site.

Belongs to the chaperonin (HSP60) family. In terms of assembly, forms a cylinder of 14 subunits composed of two heptameric rings stacked back-to-back. Interacts with the co-chaperonin GroES.

Its subcellular location is the cytoplasm. The catalysed reaction is ATP + H2O + a folded polypeptide = ADP + phosphate + an unfolded polypeptide.. Together with its co-chaperonin GroES, plays an essential role in assisting protein folding. The GroEL-GroES system forms a nano-cage that allows encapsulation of the non-native substrate proteins and provides a physical environment optimized to promote and accelerate protein folding. This Clostridium novyi (strain NT) protein is Chaperonin GroEL.